A 300-amino-acid polypeptide reads, in one-letter code: Free fatty acid receptor 1 (300 aa).

The Extracellular segment spans residues 1-8; the sequence is MALSPQLF. A helical transmembrane segment spans residues 9-31; that stretch reads FALYVSAFALGFPLNLLAIRGAV. The Cytoplasmic portion of the chain corresponds to 32-41; that stretch reads ARARLRLTPN. A helical membrane pass occupies residues 42-64; sequence LVYTLHLACSDLLLAITLPVKAV. Over 65 to 79 the chain is Extracellular; that stretch reads EALASGAWPLPLPLC. A disulfide bridge connects residues cysteine 79 and cysteine 170. Residues 80 to 101 traverse the membrane as a helical segment; it reads PVFVLVHFAPLYAGGGFLAALS. Residues 102–121 lie on the Cytoplasmic side of the membrane; that stretch reads AGRYLGAAFPFGYQAVRRPR. A helical transmembrane segment spans residues 122–142; that stretch reads YSWGVCVAIWALVLCHMGLVL. Residues 143-178 lie on the Extracellular side of the membrane; that stretch reads GLEAPGGWLNTTSSSLGINTPVNGSPVCLEAWDPNS. Asparagine 152 carries N-linked (GlcNAc...) asparagine glycosylation. Residues 179–200 traverse the membrane as a helical segment; it reads ARPARLSFSILLFFVPLVITAF. Residues 201–223 are Cytoplasmic-facing; it reads CYVGCLRALAHSGLSHKRKLRAA. A helical membrane pass occupies residues 224–248; it reads WAAGGAFLTLLLCLGPYNASNVASF. At 249–256 the chain is on the extracellular side; that stretch reads VNPDLGGS. The helical transmembrane segment at 257–279 threads the bilayer; it reads WRKLGLITGSWSVVLNPLVTGYL. At 280–300 the chain is on the cytoplasmic side; the sequence is GASPGRGTVCTTRTQGGTIQK.

Belongs to the G-protein coupled receptor 1 family.

It localises to the cell membrane. In terms of biological role, G-protein coupled receptor for medium and long chain saturated and unsaturated fatty acids that plays an important role in glucose homeostasis. Fatty acid binding increases glucose-stimulated insulin secretion, and may also enhance the secretion of glucagon-like peptide 1 (GLP-1). May also play a role in bone homeostasis; receptor signaling activates pathways that inhibit osteoclast differentiation. Ligand binding leads to a conformation change that triggers signaling via G-proteins that activate phospholipase C, leading to an increase of the intracellular calcium concentration. Seems to act through a G(q) and G(i)-mediated pathway. Mediates the anti-inflammatory effects of omega-3 polyunsaturated fatty acids (PUFAs) via inhibition of NLRP3 inflammasome activation. The chain is Free fatty acid receptor 1 (FFAR1) from Mesocricetus auratus (Golden hamster).